The sequence spans 190 residues: Large ribosomal subunit protein uL5 (190 aa).

Belongs to the universal ribosomal protein uL5 family. Part of the 50S ribosomal subunit; part of the 5S rRNA/L5/L18/L25 subcomplex. Contacts the 5S rRNA and the P site tRNA. Forms a bridge to the 30S subunit in the 70S ribosome.

This is one of the proteins that bind and probably mediate the attachment of the 5S RNA into the large ribosomal subunit, where it forms part of the central protuberance. In the 70S ribosome it contacts protein S13 of the 30S subunit (bridge B1b), connecting the 2 subunits; this bridge is implicated in subunit movement. Contacts the P site tRNA; the 5S rRNA and some of its associated proteins might help stabilize positioning of ribosome-bound tRNAs. This Bifidobacterium longum (strain DJO10A) protein is Large ribosomal subunit protein uL5.